Reading from the N-terminus, the 1243-residue chain is Interphotoreceptor matrix proteoglycan 2 (1243 aa).

An N-terminal signal peptide occupies residues 1–27 (MIMFLPVGRMSLGILILFLTGGNLVSA). Residues 28-1106 (SEERQEPMHA…EFVSEPFVIG (1079 aa)) lie on the Extracellular side of the membrane. The segment at 205-234 (GLASESSAASPQESISNEIENVTEEPTQPA) is disordered. Positions 207–220 (ASESSAASPQESIS) are enriched in low complexity. Polar residues predominate over residues 221–230 (NEIENVTEEP). Asn-225 carries an N-linked (GlcNAc...) asparagine glycan. Residues 235–349 (AEQIAEFSIQ…KPTAVYTISN (115 aa)) enclose the SEA 1 domain. Residues 255–263 (RDPSSALYR) form a hyaluronan-binding motif involved in chondroitin sulfate A-binding region. Asn-297, Asn-316, and Asn-366 each carry an N-linked (GlcNAc...) asparagine glycan. Residues Thr-427, Thr-428, and Thr-429 are each glycosylated (O-linked (GalNAc...) threonine). An N-linked (GlcNAc...) asparagine glycan is attached at Asn-582. Residues Thr-701, Thr-704, and Thr-712 are each glycosylated (O-linked (GalNAc...) threonine). The span at 748–762 (EDMVHTESSSHKELD) shows a compositional bias: basic and acidic residues. The interval 748 to 768 (EDMVHTESSSHKELDSEVPVS) is disordered. 2 O-linked (GalNAc...) threonine glycosylation sites follow: Thr-817 and Thr-888. In terms of domain architecture, SEA 2 spans 900 to 1013 (GALVVFFSLR…YSLDVESGDE (114 aa)). Residues Asn-945 and Asn-959 are each glycosylated (N-linked (GlcNAc...) asparagine). 2 consecutive EGF-like domains span residues 1013 to 1054 (EANP…LPCQ) and 1055 to 1096 (SLCD…QHCE). Intrachain disulfides connect Cys-1017/Cys-1028, Cys-1022/Cys-1039, Cys-1041/Cys-1053, Cys-1057/Cys-1070, Cys-1064/Cys-1080, and Cys-1082/Cys-1095. The segment at 1083-1091 (RVGSNWWYR) is hyaluronan-binding motif involved in chondroitin sulfate C-binding. The helical transmembrane segment at 1107–1127 (ITIASVVSFLLVASAVVFFLV) threads the bilayer. Positions 1128–1136 (KMLQAQNVR) are hyaluronan-binding motif involved in chondroitin sulfate A- and C-binding. The Cytoplasmic segment spans residues 1128-1243 (KMLQAQNVRR…FVREHQMEEL (116 aa)). The interval 1139 to 1147 (RQRPTSSSR) is hyaluronan-binding motif involved in chondroitin sulfate C-binding. Residues 1212–1220 (KEEIQERMR) are hyaluronan-binding motif involved in chondroitin sulfate A- and C-binding motif.

Expressed in the retina (at protein level). Expressed in the pineal gland.

The protein resides in the photoreceptor outer segment membrane. It localises to the photoreceptor inner segment membrane. It is found in the secreted. The protein localises to the extracellular space. Its subcellular location is the extracellular matrix. The protein resides in the interphotoreceptor matrix. Chondroitin sulfate- and hyaluronan-binding proteoglycan involved in the organization of interphotoreceptor matrix; may participate in the maturation and maintenance of the light-sensitive photoreceptor outer segment. Binds heparin. In Mus musculus (Mouse), this protein is Interphotoreceptor matrix proteoglycan 2 (Impg2).